The following is a 281-amino-acid chain: Sulfur carrier protein FdhD (281 aa).

Catalysis depends on Cys-117, which acts as the Cysteine persulfide intermediate.

The protein belongs to the FdhD family.

It localises to the cytoplasm. Required for formate dehydrogenase (FDH) activity. Acts as a sulfur carrier protein that transfers sulfur from IscS to the molybdenum cofactor prior to its insertion into FDH. The chain is Sulfur carrier protein FdhD from Xanthomonas campestris pv. campestris (strain 8004).